Here is a 72-residue protein sequence, read N- to C-terminus: Large ribosomal subunit protein bL32 (72 aa).

The protein belongs to the bacterial ribosomal protein bL32 family.

The chain is Large ribosomal subunit protein bL32 from Dehalococcoides mccartyi (strain ATCC BAA-2266 / KCTC 15142 / 195) (Dehalococcoides ethenogenes (strain 195)).